Reading from the N-terminus, the 183-residue chain is Dual-action ribosomal maturation protein DarP (183 aa).

It belongs to the DarP family.

The protein localises to the cytoplasm. Member of a network of 50S ribosomal subunit biogenesis factors which assembles along the 30S-50S interface, preventing incorrect 23S rRNA structures from forming. Promotes peptidyl transferase center (PTC) maturation. The chain is Dual-action ribosomal maturation protein DarP from Citrobacter koseri (strain ATCC BAA-895 / CDC 4225-83 / SGSC4696).